A 156-amino-acid polypeptide reads, in one-letter code: Anaerobic nitrite reductase HB2 (156 aa).

A Globin domain is found at 2 to 151 (GFTDKQEALV…LASAIKAEMH (150 aa)). Positions 35-39 (EIAPV) match the Homodimerization motif. Heme b is bound by residues serine 45, lysine 59, histidine 63, and histidine 98. The Homodimerization motif lies at 105 to 117 (DPHFEVVKEALLR).

Belongs to the plant globin family. In terms of assembly, homodimer. Requires heme b as cofactor.

Its subcellular location is the cytoplasm. The protein localises to the nucleus. The catalysed reaction is Fe(III)-heme b-[protein] + nitric oxide + H2O = Fe(II)-heme b-[protein] + nitrite + 2 H(+). Its function is as follows. Phytoglobin that reduces nitrite to nitric oxide (NO) under anoxic conditions (e.g. during flooding or in waterlogged soil). May not function as an oxygen storage or transport protein. Has an unusually high affinity for O(2) through an hexacoordinate heme iron because of a very low dissociation constant. This chain is Anaerobic nitrite reductase HB2, found in Solanum lycopersicum (Tomato).